Here is a 396-residue protein sequence, read N- to C-terminus: Probable sugar efflux transporter (396 aa).

Residues 1–14 lie on the Cytoplasmic side of the membrane; sequence MTTNTVSRKVAWLR. The helical transmembrane segment at 15-35 threads the bilayer; the sequence is VVTLAVAAFIFNTTEFVPVGL. Residues 36-49 are Periplasmic-facing; that stretch reads LSDIAQSFHMQTAQ. The chain crosses the membrane as a helical span at residues 50–70; sequence VGIMLTIYAWVVALMSLPFML. Over 71 to 80 the chain is Cytoplasmic; the sequence is MTSQVERRKL. The helical transmembrane segment at 81–101 threads the bilayer; that stretch reads LICLFVVFIASHVLSFLSWSF. Position 102 (threonine 102) is a topological domain, periplasmic. The helical transmembrane segment at 103–123 threads the bilayer; the sequence is VLVISRIGVAFAHAIFWSITA. Over 124–135 the chain is Cytoplasmic; it reads SLAIRMAPAGKR. The helical transmembrane segment at 136–156 threads the bilayer; sequence AQALSLIATGTALAMVLGLPL. Residues 157 to 169 lie on the Periplasmic side of the membrane; the sequence is GRIVGQYFGWRMT. The helical transmembrane segment at 170-190 threads the bilayer; that stretch reads FFAIGIGALITLLCLIKLLPL. The Cytoplasmic segment spans residues 191-208; sequence LPSEHSGSLKSLPLLFRR. Residues 209–229 traverse the membrane as a helical segment; the sequence is PALMSIYLLTVVVVTAHYTAY. The Periplasmic portion of the chain corresponds to 230–245; sequence SYIEPFVQNIAGFSAN. A helical transmembrane segment spans residues 246 to 266; that stretch reads FATALLLLLGGAGIIGSVIFG. Topologically, residues 267-274 are cytoplasmic; sequence KLGNQYAS. Residues 275-295 form a helical membrane-spanning segment; the sequence is ALVSTAIALLLVCLALLLPAA. The Periplasmic segment spans residues 296 to 298; that stretch reads NSE. The chain crosses the membrane as a helical span at residues 299–319; the sequence is IHLGVLSIFWGIAMMIIGLGM. The Cytoplasmic portion of the chain corresponds to 320 to 332; that stretch reads QVKVLALAPDATD. Residues 333 to 353 traverse the membrane as a helical segment; the sequence is VAMALFSGIFNIGIGAGALVG. At 354–363 the chain is on the periplasmic side; it reads NQVSLHWSMS. Residues 364 to 384 traverse the membrane as a helical segment; sequence MIGYVGTVPAFAALIWSIIIF. Topologically, residues 385–396 are cytoplasmic; it reads RRWPVTLEEQTQ.

The protein belongs to the major facilitator superfamily. SotB (TC 2.A.1.2) family.

Its subcellular location is the cell inner membrane. Functionally, involved in the efflux of sugars. The physiological role may be the reduction of the intracellular concentration of toxic sugars or sugar metabolites. The polypeptide is Probable sugar efflux transporter (Escherichia coli O157:H7).